We begin with the raw amino-acid sequence, 430 residues long: Bifunctional protein GlmU (430 aa).

The interval 1–227 (MISKTHTFVI…GEEATGINNR (227 aa)) is pyrophosphorylase. Residues Lys-25, Gln-74, 79-80 (GT), 104-106 (YGD), Gly-140, Glu-154, Asn-168, and Asn-225 each bind UDP-N-acetyl-alpha-D-glucosamine. Asp-106 provides a ligand contact to Mg(2+). A Mg(2+)-binding site is contributed by Asn-225. The tract at residues 228 to 248 (NDLIKAEFYFQENKRKIFTDS) is linker. The interval 249–430 (GVTLVAPETV…REKQVTKRIK (182 aa)) is N-acetyltransferase. UDP-N-acetyl-alpha-D-glucosamine contacts are provided by Arg-314 and Lys-332. His-344 serves as the catalytic Proton acceptor. Residues Tyr-347 and Asn-358 each contribute to the UDP-N-acetyl-alpha-D-glucosamine site. Acetyl-CoA contacts are provided by residues Ala-361, 367 to 368 (NY), Ala-404, and Arg-421.

The protein in the N-terminal section; belongs to the N-acetylglucosamine-1-phosphate uridyltransferase family. This sequence in the C-terminal section; belongs to the transferase hexapeptide repeat family. Homotrimer. It depends on Mg(2+) as a cofactor.

It localises to the cytoplasm. The catalysed reaction is alpha-D-glucosamine 1-phosphate + acetyl-CoA = N-acetyl-alpha-D-glucosamine 1-phosphate + CoA + H(+). The enzyme catalyses N-acetyl-alpha-D-glucosamine 1-phosphate + UTP + H(+) = UDP-N-acetyl-alpha-D-glucosamine + diphosphate. The protein operates within nucleotide-sugar biosynthesis; UDP-N-acetyl-alpha-D-glucosamine biosynthesis; N-acetyl-alpha-D-glucosamine 1-phosphate from alpha-D-glucosamine 6-phosphate (route II): step 2/2. Its pathway is nucleotide-sugar biosynthesis; UDP-N-acetyl-alpha-D-glucosamine biosynthesis; UDP-N-acetyl-alpha-D-glucosamine from N-acetyl-alpha-D-glucosamine 1-phosphate: step 1/1. It functions in the pathway bacterial outer membrane biogenesis; LPS lipid A biosynthesis. In terms of biological role, catalyzes the last two sequential reactions in the de novo biosynthetic pathway for UDP-N-acetylglucosamine (UDP-GlcNAc). The C-terminal domain catalyzes the transfer of acetyl group from acetyl coenzyme A to glucosamine-1-phosphate (GlcN-1-P) to produce N-acetylglucosamine-1-phosphate (GlcNAc-1-P), which is converted into UDP-GlcNAc by the transfer of uridine 5-monophosphate (from uridine 5-triphosphate), a reaction catalyzed by the N-terminal domain. The sequence is that of Bifunctional protein GlmU from Wolbachia pipientis wMel.